The chain runs to 164 residues: ATP synthase subunit b (164 aa).

A helical transmembrane segment spans residues 7 to 25 (SFWLAVSFIIFVYLIYRPA).

It belongs to the ATPase B chain family. In terms of assembly, F-type ATPases have 2 components, F(1) - the catalytic core - and F(0) - the membrane proton channel. F(1) has five subunits: alpha(3), beta(3), gamma(1), delta(1), epsilon(1). F(0) has three main subunits: a(1), b(2) and c(10-14). The alpha and beta chains form an alternating ring which encloses part of the gamma chain. F(1) is attached to F(0) by a central stalk formed by the gamma and epsilon chains, while a peripheral stalk is formed by the delta and b chains.

It is found in the cell inner membrane. F(1)F(0) ATP synthase produces ATP from ADP in the presence of a proton or sodium gradient. F-type ATPases consist of two structural domains, F(1) containing the extramembraneous catalytic core and F(0) containing the membrane proton channel, linked together by a central stalk and a peripheral stalk. During catalysis, ATP synthesis in the catalytic domain of F(1) is coupled via a rotary mechanism of the central stalk subunits to proton translocation. Functionally, component of the F(0) channel, it forms part of the peripheral stalk, linking F(1) to F(0). The protein is ATP synthase subunit b of Rickettsia felis (strain ATCC VR-1525 / URRWXCal2) (Rickettsia azadi).